A 369-amino-acid chain; its full sequence is Methionine import ATP-binding protein MetN (369 aa).

The ABC transporter domain occupies 31–266 (VEMKDVRRMF…PQSPVTQSML (236 aa)). Position 63–70 (63–70 (GRSGAGKS)) interacts with ATP.

It belongs to the ABC transporter superfamily. Methionine importer (TC 3.A.1.24) family. The complex is composed of two ATP-binding proteins (MetN), two transmembrane proteins (MetI) and a solute-binding protein (MetQ).

The protein localises to the cell inner membrane. The enzyme catalyses L-methionine(out) + ATP + H2O = L-methionine(in) + ADP + phosphate + H(+). It catalyses the reaction D-methionine(out) + ATP + H2O = D-methionine(in) + ADP + phosphate + H(+). Functionally, part of the ABC transporter complex MetNIQ involved in methionine import. Responsible for energy coupling to the transport system. The chain is Methionine import ATP-binding protein MetN from Brucella abortus (strain 2308).